The following is a 131-amino-acid chain: Small ribosomal subunit protein uS8 (131 aa).

Belongs to the universal ribosomal protein uS8 family. As to quaternary structure, part of the 30S ribosomal subunit. Contacts proteins S5 and S12.

Functionally, one of the primary rRNA binding proteins, it binds directly to 16S rRNA central domain where it helps coordinate assembly of the platform of the 30S subunit. This Delftia acidovorans (strain DSM 14801 / SPH-1) protein is Small ribosomal subunit protein uS8.